Reading from the N-terminus, the 576-residue chain is Mitogen-activated protein kinase 15 (576 aa).

The segment at 20–50 (RPSSSSSSNNHDQIQNPPTVSNPNDDEDLKK) is disordered. A compositionally biased stretch (polar residues) spans 28 to 42 (NNHDQIQNPPTVSNP). The Protein kinase domain maps to 90-381 (YQIQEVVGKG…AEEALADPYF (292 aa)). ATP is bound by residues 96–104 (VGKGSYGVV) and lysine 119. Residue aspartate 216 is the Proton acceptor of the active site. Threonine 252 bears the Phosphothreonine mark. Positions 252–254 (TDY) match the TXY motif. Position 254 is a phosphotyrosine (tyrosine 254). Threonine 257 is modified (phosphothreonine). The segment at 458-535 (EENQGPGGRS…GGGYSARNLM (78 aa)) is disordered. Positions 477 to 501 (LPRERVPASKNETVEERSNDIERRT) are enriched in basic and acidic residues. The span at 504-520 (AVASTLDSPKASQQAEG) shows a compositional bias: polar residues.

It belongs to the protein kinase superfamily. CMGC Ser/Thr protein kinase family. MAP kinase subfamily. Interacts with MKK7. Post-translationally, dually phosphorylated on Thr-252 and Tyr-254, which activates the enzyme.

The enzyme catalyses L-seryl-[protein] + ATP = O-phospho-L-seryl-[protein] + ADP + H(+). It carries out the reaction L-threonyl-[protein] + ATP = O-phospho-L-threonyl-[protein] + ADP + H(+). With respect to regulation, activated by threonine and tyrosine phosphorylation. The protein is Mitogen-activated protein kinase 15 (MPK15) of Arabidopsis thaliana (Mouse-ear cress).